The following is a 134-amino-acid chain: Interleukin-5 (134 aa).

The N-terminal stretch at 1–19 (MRMLLHLSLLALGAAYVSA) is a signal peptide. N-linked (GlcNAc...) asparagine glycans are attached at residues N76 and N90.

The protein belongs to the IL-5 family. As to quaternary structure, homodimer; disulfide-linked. Interacts with IL5RA. Interacts with CSF2RB.

It is found in the secreted. Functionally, homodimeric cytokine expressed predominantly by T-lymphocytes and NK cells that plays an important role in the survival, differentiation, and chemotaxis of eosinophils. Also acts on activated and resting B-cells to induce immunoglobulin production, growth, and differentiation. Mechanistically, exerts its biological effects through a receptor composed of IL5RA subunit and the cytokine receptor common subunit beta/CSF2RB. Binding to the receptor leads to activation of various kinases including LYN, SYK and JAK2 and thereby propagates signals through the RAS-MAPK and JAK-STAT5 pathways respectively. This is Interleukin-5 (IL5) from Felis catus (Cat).